Here is a 233-residue protein sequence, read N- to C-terminus: tRNA (guanine-N(1)-)-methyltransferase (233 aa).

S-adenosyl-L-methionine-binding positions include Gly113 and 133 to 138 (IGDYVL).

It belongs to the RNA methyltransferase TrmD family. As to quaternary structure, homodimer.

It is found in the cytoplasm. It carries out the reaction guanosine(37) in tRNA + S-adenosyl-L-methionine = N(1)-methylguanosine(37) in tRNA + S-adenosyl-L-homocysteine + H(+). Its function is as follows. Specifically methylates guanosine-37 in various tRNAs. This chain is tRNA (guanine-N(1)-)-methyltransferase, found in Ruminiclostridium cellulolyticum (strain ATCC 35319 / DSM 5812 / JCM 6584 / H10) (Clostridium cellulolyticum).